A 582-amino-acid chain; its full sequence is MDLKVKVDRSRDVSQPLDKLGPDETLKANSDQLRGTIAQSLADPITLAVDPSDNKLMKFHGIYQQDDRDIRDERRRQKLEAAYSFMARVRLPGGVCSTSQWLKLDELGRAYAGNTLRLTTRQTFQLHRVLKHHLRPALQGLREVVLDTKAACGDDTRGVMATVNPLVSKVHADVYALAKQASEHALHRTGAYREIWYEEERDPSTVKSAPDGSEEPFYGRTYMPRKFKIGFAVPPSNDIDVYAQDLGFIAIVKRGKLAGFNVAIGGGLGRTDQAPKTYPRLASVIGYVGVDKLFQTIDAVMSVQRDYGDRVDRLHARFKYTIDDKGLDWIKAEIERRLGFELAPAALYTFTSNSDPLGWVKGEDGHWHCTLFIQNGRVINHPGQPLMDGLREIARVHKGHFRITPNQNLIIADIAPEDRPAIEEVMKEYGLDAFETRSQLRLNSMACVALPTCGLAMAESERYLPDLISKIEPLLERYGLTDEPITIRMTGCPNGCARPYVAEIALTGRAPGKYNLYLGGGFHGERLNKMYLENVGESAILDALDKVLGHFARERTPGEHFGDFAIRAGYVAEVKEGRYFND.

Over residues 1–12 (MDLKVKVDRSRD) the composition is skewed to basic and acidic residues. A disordered region spans residues 1–26 (MDLKVKVDRSRDVSQPLDKLGPDETL). [4Fe-4S] cluster contacts are provided by C447, C453, C492, and C496. C496 is a siroheme binding site.

Belongs to the nitrite and sulfite reductase 4Fe-4S domain family. In terms of assembly, alpha(8)-beta(8). The alpha component is a flavoprotein, the beta component is a hemoprotein. Siroheme serves as cofactor. The cofactor is [4Fe-4S] cluster.

The catalysed reaction is hydrogen sulfide + 3 NADP(+) + 3 H2O = sulfite + 3 NADPH + 4 H(+). Its pathway is sulfur metabolism; hydrogen sulfide biosynthesis; hydrogen sulfide from sulfite (NADPH route): step 1/1. Its function is as follows. Component of the sulfite reductase complex that catalyzes the 6-electron reduction of sulfite to sulfide. This is one of several activities required for the biosynthesis of L-cysteine from sulfate. This is Sulfite reductase [NADPH] hemoprotein beta-component from Afipia carboxidovorans (strain ATCC 49405 / DSM 1227 / KCTC 32145 / OM5) (Oligotropha carboxidovorans).